The following is a 464-amino-acid chain: Neuronal acetylcholine receptor subunit beta-3 (464 aa).

The first 30 residues, 1–30, serve as a signal peptide directing secretion; it reads MTGFLRVFLVLSATLSGSWVTLTATAGLSS. Residues 31–238 are Extracellular-facing; that stretch reads VAEHEDALLR…VTYSFVLRRL (208 aa). N-linked (GlcNAc...) asparagine glycosylation is found at Asn55 and Asn172. Residues Cys159 and Cys173 are joined by a disulfide bond. 3 consecutive transmembrane segments (helical) span residues 239-263, 271-288, and 305-326; these read PLFY…VFYL, LSLS…LLVI, and YLLF…VINV. The Cytoplasmic portion of the chain corresponds to 327-434; it reads HHRSSSTYHP…WKFVAQVLDR (108 aa). Residues 435–453 form a helical membrane-spanning segment; the sequence is IFLWLFLIASVLGSILIFI.

This sequence belongs to the ligand-gated ion channel (TC 1.A.9) family. Acetylcholine receptor (TC 1.A.9.1) subfamily. Beta-3/CHRNB3 sub-subfamily. In terms of assembly, neuronal AChR seems to be composed of two different type of subunits: alpha and beta. CHRNB3/beta-3 subunit is only able to form functional nAChRs when co-assembled with another beta subunit. Participates in pentameric assemblies along with CHRNA4/alpha-4 and CHRNB2/beta-2 subunits and with CHRNA6/alpha-6 as well, forming stoichiometries such as (CHRNA3:CHRNB4)2:CHRNB3, (CHRNA4:CHRNB2)2:CHRNB3 or (CHRNA6:CHRNB2)2:CHRNB3.

It localises to the synaptic cell membrane. It is found in the cell membrane. It carries out the reaction Ca(2+)(in) = Ca(2+)(out). The enzyme catalyses K(+)(in) = K(+)(out). It catalyses the reaction Na(+)(in) = Na(+)(out). Activated by a myriad of ligands such as acetylcholine, cytisine, nicotine, choline and epibatidine. Component of neuronal acetylcholine receptors (nAChRs) that function as pentameric, ligand-gated cation channels with high calcium permeability among other activities. nAChRs are excitatory neurotrasnmitter receptors formed by a collection of nAChR subunits known to mediate synaptic transmission in the nervous system and the neuromuscular junction. Each nAchR subunit confers differential attributes to channel properties, including activation, deactivation and desensitization kinetics, pH sensitivity, cation permeability, and binding to allosteric modulators. Has an accessory rather than functional role and is only able to form functional nAChRs when co-assembled with another beta subunit. Participates in pentameric assemblies along with CHRNA3, CHRNA4, CHRNA6, CHRNB2 and CHRNB4. Modulates receptor assembly and increases receptor sensitivity to nicotine when associated with CHRNB2, CHRNA4 and/or CHRNA6 as well as CHRNA3 and CHRNB4. Seems to play a role in nicotine addiction. The protein is Neuronal acetylcholine receptor subunit beta-3 (Chrnb3) of Rattus norvegicus (Rat).